Consider the following 284-residue polypeptide: 4-diphosphocytidyl-2-C-methyl-D-erythritol kinase (284 aa).

The active site involves Lys-14. ATP is bound at residue 98–108; it reads PMGGGLGGGSS. Residue Asp-140 is part of the active site.

Belongs to the GHMP kinase family. IspE subfamily.

It catalyses the reaction 4-CDP-2-C-methyl-D-erythritol + ATP = 4-CDP-2-C-methyl-D-erythritol 2-phosphate + ADP + H(+). The protein operates within isoprenoid biosynthesis; isopentenyl diphosphate biosynthesis via DXP pathway; isopentenyl diphosphate from 1-deoxy-D-xylulose 5-phosphate: step 3/6. Functionally, catalyzes the phosphorylation of the position 2 hydroxy group of 4-diphosphocytidyl-2C-methyl-D-erythritol. The protein is 4-diphosphocytidyl-2-C-methyl-D-erythritol kinase of Shewanella baltica (strain OS185).